Consider the following 465-residue polypeptide: E3 ubiquitin-protein ligase TRIM15 (465 aa).

Residues 16–61 form an RING-type zinc finger; it reads CTLCVGPLEDAVTAPCGHTFCRLCLPTLSQMGAQSSGKILLCPLCQ. A B box-type zinc finger spans residues 78-119; sequence LGETYCEEHGEKIYFFCENDAEFLCVFCREGPTHQAHTVGFL. The Zn(2+) site is built by cysteine 83, histidine 86, cysteine 105, and histidine 111. Positions 126–229 form a coiled coil; that stretch reads YRDRLRSRLE…VKELEEKCQQ (104 aa). Residues 276–465 enclose the B30.2/SPRY domain; it reads EMMRMFSENL…KKGSCLTLKG (190 aa).

Belongs to the TRIM/RBCC family. In terms of assembly, interacts with paxillin/PXN; this interaction recruits TRIM15 to focal adhesions. Interacts with TRIM8; this interaction prevents TRIM8 cytoplasmic translocation.

It localises to the cytoplasm. Its subcellular location is the nucleus. It is found in the cell junction. The protein localises to the focal adhesion. It catalyses the reaction S-ubiquitinyl-[E2 ubiquitin-conjugating enzyme]-L-cysteine + [acceptor protein]-L-lysine = [E2 ubiquitin-conjugating enzyme]-L-cysteine + N(6)-ubiquitinyl-[acceptor protein]-L-lysine.. Functionally, E3 ubiquitin ligase that plays a role in several processes including innate antiviral immnity, cell migration and chemotaxis. Acts as a 'Lys-63'-specific ubiquitin ligase for MAPK1/ERK2 and MAPK3/ERK1, promoting their activation by facilitating their interaction with MAP2K1 and MAP2K2. Also plays a role in cell migration and chemotaxis by acting as a stable focal adhesion component upon recruitment by multi-adapter protein paxillin/PXN. Functions in the RIGI-mediated interferon induction pathway upstream or at the level of MAVS. Inhibits NF-kappa-B activation by turnover of 'Lys-63'-linked ubiquitination of MAP3K7/TAK1. Mechanistically, prevents TRIM8 cytoplasmic translocation and thus inhibits TRIM8-mediated 'Lys-63'-linked polyubiquitination of MAP3K7/TAK1 in the cytoplasm. Also has an important regulatory effect on the activation of hepatic stellate cells (HSCs). This Macaca mulatta (Rhesus macaque) protein is E3 ubiquitin-protein ligase TRIM15 (TRIM15).